Here is a 307-residue protein sequence, read N- to C-terminus: Elongation factor Ts (307 aa).

Residues 79-82 (TDFV) form an involved in Mg(2+) ion dislocation from EF-Tu region.

Belongs to the EF-Ts family.

The protein resides in the cytoplasm. Its function is as follows. Associates with the EF-Tu.GDP complex and induces the exchange of GDP to GTP. It remains bound to the aminoacyl-tRNA.EF-Tu.GTP complex up to the GTP hydrolysis stage on the ribosome. This chain is Elongation factor Ts, found in Bartonella henselae (strain ATCC 49882 / DSM 28221 / CCUG 30454 / Houston 1) (Rochalimaea henselae).